An 875-amino-acid chain; its full sequence is Aminopeptidase M1-B (875 aa).

The required for membrane association stretch occupies residues 96–203; sequence IGEGVLKMDF…MSTYLVAIVV (108 aa). Substrate-binding positions include E136 and 269–273; that span reads GAMEN. H305 is a Zn(2+) binding site. Catalysis depends on E306, which acts as the Proton acceptor. Residues H309 and E328 each contribute to the Zn(2+) site. Residues 722–723 carry the Dileucine internalization motif motif; that stretch reads LL.

It belongs to the peptidase M1 family. As to quaternary structure, homodimer. Requires Zn(2+) as cofactor.

Its subcellular location is the membrane. The protein resides in the microsome membrane. The protein localises to the cytoplasm. The enzyme catalyses Release of an N-terminal amino acid, Xaa-|-Yaa- from a peptide, amide or arylamide. Xaa is preferably Ala, but may be most amino acids including Pro (slow action). When a terminal hydrophobic residue is followed by a prolyl residue, the two may be released as an intact Xaa-Pro dipeptide.. The polypeptide is Aminopeptidase M1-B (Oryza sativa subsp. japonica (Rice)).